An 808-amino-acid chain; its full sequence is Probable phosphoketolase 1 (808 aa).

The protein belongs to the XFP family. Thiamine diphosphate is required as a cofactor.

The chain is Probable phosphoketolase 1 from Nostoc sp. (strain PCC 7120 / SAG 25.82 / UTEX 2576).